The primary structure comprises 513 residues: Secreted LysM effector Vd6LysM (513 aa).

The signal sequence occupies residues M1 to A19. 4 consecutive LysM domains span residues S38–V85, K136–V182, K219–V265, and K302–V348. The segment covering T357–P367 has biased composition (low complexity). Residues T357–T377 are disordered. LysM domains lie at K387–V433 and K465–V511.

It belongs to the secreted LysM effector family.

In terms of biological role, might have a role in sequestration of chitin oligosaccharides (breakdown products of fungal cell walls that are released during invasion and act as triggers of host immunity) to dampen host defense. Does not play an important role during host colonization. This Verticillium dahliae (strain VdLs.17 / ATCC MYA-4575 / FGSC 10137) (Verticillium wilt) protein is Secreted LysM effector Vd6LysM.